The following is a 352-amino-acid chain: RNA-binding protein lark (352 aa).

RRM domains are found at residues 7-77 (FKLF…AAKS) and 86-156 (TKIF…VSTS). The CCHC-type zinc-finger motif lies at 168–185 (EQCYRCGRSGHWSKECPR). Disordered stretches follow at residues 187 to 228 (YGSA…LRDR) and 254 to 352 (YQTS…YAPY). Residues S198 and S201 each carry the phosphoserine modification. Composition is skewed to pro residues over residues 214-224 (PYPPPPPPPPF) and 262-277 (FPPPPISRREPMPLPP). Residues 279 to 288 (LSGSLRSCSV) are compositionally biased toward polar residues. Residues S315 and S325 each carry the phosphoserine modification. The span at 320 to 334 (GYEDFSRDAFDERMI) shows a compositional bias: basic and acidic residues.

In terms of tissue distribution, expressed in the CNS and in CCAP neurons of the ventral nervous system (VNS), which control insect ecdysis.

It is found in the cytoplasm. The protein localises to the nucleus. In terms of biological role, essential RNA-binding protein. May be required for circadian repression of eclosion. Also essential for nurse cell dumping during oogenesis, the process whereby the cytoplasmic contents of nurse cells are transferred to the oocyte late in it's development. This chain is RNA-binding protein lark (lark), found in Drosophila melanogaster (Fruit fly).